The primary structure comprises 462 residues: A-type ATP synthase subunit B (462 aa).

This sequence belongs to the ATPase alpha/beta chains family. In terms of assembly, has multiple subunits with at least A(3), B(3), C, D, E, F, H, I and proteolipid K(x).

Its subcellular location is the cell membrane. Functionally, component of the A-type ATP synthase that produces ATP from ADP in the presence of a proton gradient across the membrane. The B chain is a regulatory subunit. The protein is A-type ATP synthase subunit B of Methanococcus maripaludis (strain C7 / ATCC BAA-1331).